The primary structure comprises 348 residues: Ion-translocating oxidoreductase complex subunit D (348 aa).

5 helical membrane passes run phenylalanine 19 to glycine 39, glycine 41 to alanine 61, lysine 66 to methionine 86, alanine 87 to leucine 107, and proline 122 to leucine 142. Position 186 is an FMN phosphoryl threonine (threonine 186). The next 5 helical transmembrane spans lie at isoleucine 212 to leucine 232, isoleucine 236 to threonine 256, leucine 265 to threonine 285, serine 291 to isoleucine 311, and glycine 315 to isoleucine 335.

This sequence belongs to the NqrB/RnfD family. In terms of assembly, the complex is composed of six subunits: RnfA, RnfB, RnfC, RnfD, RnfE and RnfG. Requires FMN as cofactor.

It localises to the cell inner membrane. Its function is as follows. Part of a membrane-bound complex that couples electron transfer with translocation of ions across the membrane. This is Ion-translocating oxidoreductase complex subunit D from Haemophilus ducreyi (strain 35000HP / ATCC 700724).